The sequence spans 45 residues: Large ribosomal subunit protein bL36 (45 aa).

The disordered stretch occupies residues 1-45; that stretch reads MRVSSSIKADPSKGDKLVRRKGRLYVINKKDPNRKQRQAGPARKK.

It belongs to the bacterial ribosomal protein bL36 family.

In Chlamydia trachomatis serovar L2 (strain ATCC VR-902B / DSM 19102 / 434/Bu), this protein is Large ribosomal subunit protein bL36.